The primary structure comprises 130 residues: Small ribosomal subunit protein uS11 (130 aa).

The protein belongs to the universal ribosomal protein uS11 family. In terms of assembly, part of the 30S ribosomal subunit. Interacts with proteins S7 and S18. Binds to IF-3.

Located on the platform of the 30S subunit, it bridges several disparate RNA helices of the 16S rRNA. Forms part of the Shine-Dalgarno cleft in the 70S ribosome. The chain is Small ribosomal subunit protein uS11 from Shewanella violacea (strain JCM 10179 / CIP 106290 / LMG 19151 / DSS12).